Consider the following 512-residue polypeptide: Glycerol kinase, glycosomal (512 aa).

Position 11 (threonine 11) interacts with substrate. Arginine 15 is a binding site for ATP. The substrate site is built by arginine 84, tyrosine 139, and aspartate 254. Residues threonine 276, glycine 321, and 422 to 426 contribute to the ATP site; that span reads GLSKN. The Microbody targeting signal signature appears at 510–512; sequence AKL.

It belongs to the FGGY kinase family.

The protein resides in the glycosome. It catalyses the reaction glycerol + ATP = sn-glycerol 3-phosphate + ADP + H(+). It participates in polyol metabolism; glycerol degradation via glycerol kinase pathway; sn-glycerol 3-phosphate from glycerol: step 1/1. In terms of biological role, catalyzes the phosphorylation of glycerol using ATP. Under anoxic conditions, when glycerol 3-phosphate accumulates in the glycosome, it catalyzes the reverse reaction, maintaining the ATP balance. Key enzyme for the survival of bloodstream forms under anoxic conditions. The protein is Glycerol kinase, glycosomal (GK) of Trypanosoma brucei brucei.